Here is a 359-residue protein sequence, read N- to C-terminus: Ribosomal RNA large subunit methyltransferase M (359 aa).

Residues S186, 219–222, D238, D258, and D275 contribute to the S-adenosyl-L-methionine site; that span reads CPGG. The Proton acceptor role is filled by K304.

The protein belongs to the class I-like SAM-binding methyltransferase superfamily. RNA methyltransferase RlmE family. RlmM subfamily. As to quaternary structure, monomer.

It localises to the cytoplasm. The enzyme catalyses cytidine(2498) in 23S rRNA + S-adenosyl-L-methionine = 2'-O-methylcytidine(2498) in 23S rRNA + S-adenosyl-L-homocysteine + H(+). Catalyzes the 2'-O-methylation at nucleotide C2498 in 23S rRNA. In Vibrio parahaemolyticus serotype O3:K6 (strain RIMD 2210633), this protein is Ribosomal RNA large subunit methyltransferase M.